Consider the following 356-residue polypeptide: Histidinol-phosphate aminotransferase (356 aa).

Lysine 214 carries the post-translational modification N6-(pyridoxal phosphate)lysine.

Belongs to the class-II pyridoxal-phosphate-dependent aminotransferase family. Histidinol-phosphate aminotransferase subfamily. In terms of assembly, homodimer. The cofactor is pyridoxal 5'-phosphate.

It carries out the reaction L-histidinol phosphate + 2-oxoglutarate = 3-(imidazol-4-yl)-2-oxopropyl phosphate + L-glutamate. It functions in the pathway amino-acid biosynthesis; L-histidine biosynthesis; L-histidine from 5-phospho-alpha-D-ribose 1-diphosphate: step 7/9. The chain is Histidinol-phosphate aminotransferase from Escherichia coli O7:K1 (strain IAI39 / ExPEC).